A 293-amino-acid chain; its full sequence is Pyridoxal 5'-phosphate synthase subunit PdxS (293 aa).

Aspartate 23 contributes to the D-ribose 5-phosphate binding site. Residue lysine 80 is the Schiff-base intermediate with D-ribose 5-phosphate of the active site. Position 152 (glycine 152) interacts with D-ribose 5-phosphate. Arginine 164 is a D-glyceraldehyde 3-phosphate binding site. D-ribose 5-phosphate-binding positions include glycine 213 and 234–235 (GS).

This sequence belongs to the PdxS/SNZ family. In terms of assembly, in the presence of PdxT, forms a dodecamer of heterodimers.

It catalyses the reaction aldehydo-D-ribose 5-phosphate + D-glyceraldehyde 3-phosphate + L-glutamine = pyridoxal 5'-phosphate + L-glutamate + phosphate + 3 H2O + H(+). The protein operates within cofactor biosynthesis; pyridoxal 5'-phosphate biosynthesis. Catalyzes the formation of pyridoxal 5'-phosphate from ribose 5-phosphate (RBP), glyceraldehyde 3-phosphate (G3P) and ammonia. The ammonia is provided by the PdxT subunit. Can also use ribulose 5-phosphate and dihydroxyacetone phosphate as substrates, resulting from enzyme-catalyzed isomerization of RBP and G3P, respectively. This chain is Pyridoxal 5'-phosphate synthase subunit PdxS, found in Thermus thermophilus (strain ATCC 27634 / DSM 579 / HB8).